A 277-amino-acid polypeptide reads, in one-letter code: Protein CMSS1 (277 aa).

Residues 1–14 (MADDLGNEWWEEPA) are compositionally biased toward acidic residues. Residues 1–91 (MADDLGNEWW…QHAPTAGTPE (91 aa)) are disordered. Residues 24-34 (EEVKESEESKG) are compositionally biased toward basic and acidic residues. The segment covering 35–52 (NKKKKIPSGKTQVKRKKE) has biased composition (basic residues). The segment covering 53–66 (VKVSQEAEKEDSAP) has biased composition (basic and acidic residues).

Belongs to the CMS1 family.

The sequence is that of Protein CMSS1 (cmss1) from Xenopus laevis (African clawed frog).